A 460-amino-acid polypeptide reads, in one-letter code: tRNA modification GTPase MnmE (460 aa).

Positions 22, 83, and 122 each coordinate (6S)-5-formyl-5,6,7,8-tetrahydrofolate. The region spanning Gly-219–Gln-381 is the TrmE-type G domain. Asn-229 serves as a coordination point for K(+). Residues Asn-229 to Ser-234, Ser-248 to Thr-254, and Asp-273 to Gly-276 each bind GTP. Ser-233 provides a ligand contact to Mg(2+). 3 residues coordinate K(+): Ser-248, Ile-250, and Thr-253. Thr-254 is a Mg(2+) binding site. Lys-460 is a binding site for (6S)-5-formyl-5,6,7,8-tetrahydrofolate.

It belongs to the TRAFAC class TrmE-Era-EngA-EngB-Septin-like GTPase superfamily. TrmE GTPase family. Homodimer. Heterotetramer of two MnmE and two MnmG subunits. K(+) is required as a cofactor.

It is found in the cytoplasm. Functionally, exhibits a very high intrinsic GTPase hydrolysis rate. Involved in the addition of a carboxymethylaminomethyl (cmnm) group at the wobble position (U34) of certain tRNAs, forming tRNA-cmnm(5)s(2)U34. The polypeptide is tRNA modification GTPase MnmE (Aster yellows witches'-broom phytoplasma (strain AYWB)).